The chain runs to 161 residues: Regulator of ribonuclease activity A (161 aa).

Belongs to the RraA family. In terms of assembly, homotrimer. Binds to both RNA-binding sites in the C-terminal region of Rne and to RhlB.

The protein localises to the cytoplasm. Functionally, globally modulates RNA abundance by binding to RNase E (Rne) and regulating its endonucleolytic activity. Can modulate Rne action in a substrate-dependent manner by altering the composition of the degradosome. Modulates RNA-binding and helicase activities of the degradosome. The sequence is that of Regulator of ribonuclease activity A from Alteromonas mediterranea (strain DSM 17117 / CIP 110805 / LMG 28347 / Deep ecotype).